The primary structure comprises 341 residues: Ketol-acid reductoisomerase (NADP(+)) (341 aa).

The region spanning 1–182 (MATIYYDKDA…GCTRAGVLET (182 aa)) is the KARI N-terminal Rossmann domain. Residues 25–28 (YGSQ), serine 51, serine 53, and 83–86 (DQTQ) each bind NADP(+). Histidine 108 is a catalytic residue. An NADP(+)-binding site is contributed by glycine 134. Residues 183–328 (TFKEETETDL…KRLRDMMSWI (146 aa)) form the KARI C-terminal knotted domain. Positions 191, 195, 227, and 231 each coordinate Mg(2+). Serine 252 contributes to the substrate binding site.

The protein belongs to the ketol-acid reductoisomerase family. The cofactor is Mg(2+).

The enzyme catalyses (2R)-2,3-dihydroxy-3-methylbutanoate + NADP(+) = (2S)-2-acetolactate + NADPH + H(+). It carries out the reaction (2R,3R)-2,3-dihydroxy-3-methylpentanoate + NADP(+) = (S)-2-ethyl-2-hydroxy-3-oxobutanoate + NADPH + H(+). It participates in amino-acid biosynthesis; L-isoleucine biosynthesis; L-isoleucine from 2-oxobutanoate: step 2/4. Its pathway is amino-acid biosynthesis; L-valine biosynthesis; L-valine from pyruvate: step 2/4. Involved in the biosynthesis of branched-chain amino acids (BCAA). Catalyzes an alkyl-migration followed by a ketol-acid reduction of (S)-2-acetolactate (S2AL) to yield (R)-2,3-dihydroxy-isovalerate. In the isomerase reaction, S2AL is rearranged via a Mg-dependent methyl migration to produce 3-hydroxy-3-methyl-2-ketobutyrate (HMKB). In the reductase reaction, this 2-ketoacid undergoes a metal-dependent reduction by NADPH to yield (R)-2,3-dihydroxy-isovalerate. The protein is Ketol-acid reductoisomerase (NADP(+)) of Anaeromyxobacter sp. (strain K).